A 540-amino-acid polypeptide reads, in one-letter code: Putative actin-fragmin kinase DDB_G0287957 (540 aa).

The stretch at 27 to 68 (KNENLNIKNEILNNNNNNNNNKNNNNNNNNNNNIENNSKNEN) forms a coiled coil. 2 disordered regions span residues 37–70 (ILNN…ENFN) and 317–341 (NNNN…INNC).

The protein belongs to the protein kinase superfamily. AFK Ser/Thr protein kinase family.

The polypeptide is Putative actin-fragmin kinase DDB_G0287957 (Dictyostelium discoideum (Social amoeba)).